The primary structure comprises 827 residues: MARWSGQIMCFRVGHFLLVGHFLLVGNFLLTDDSDTFSFVALGGGREVGRSCHVISFKGKTIMLDAGVHPAHSGLASLPFYDEFDLSTIDILLISHFHLDHAASLPYVMQKTNFKGRVFMTHPTKGIYRWLLSDFVRVTSGAESDPDLYSEADLTASFNKIETIDYHSTMEVNGVKFTAYHAGHVLGAAMYTIEVGGVKVLFTGDYSREEDRHLNQAEVPPMKPDILICESTYGTGTHLPRLEREQRLTGLIHSTLDKGGKCLLPVFALGRAQEILLILDEYWEAHPDLQEFSIYYASALAKKCIAVYQTYINMMNDNIRRRFRDQKTNPFRFKYIKNIKNLDRFDDMGPCVMVASPGMLQSGVSRSLLERWAPDPKNTLILTGYSVEGTMAKQIINEPNEIPSAQNPDLKVPRRLAVEELSFAAHVDFQQNSEFIDLVDSKNIILVHGELNNMQRLKAALLAKYRGLKNSPREKTIYNPRNCEEVELAFKGVKVAKTVGKMAEEKPHVGQIISGVVVQKDFNYGLMGVADLREHVGLSTSSVLERQTVTVNAGVDLVKYHLEQMFGYVEMRETENVKIEEMEDDVAEEEEDKEVKQEVEDVTMEGEVKDETAEEVKKEEEVAEEFKQEVEGDSDTSAGTTFVVMNSVTVKHTPTSCTIEWVGSCLNDSIADAVLAILLTVDNSRASVKMSSKQCAHSHGHEDGHSNSSLDERVLQLSSILKAQFGDSYIVSEDGKSANIKIDAMEATISFSDLSVTGSPPPLVQRVQVAVDRAISLVAPLAQKLSAVDLVEGFKAIENVKDREENGEVKAEDEEKVKAEEKVKEEE.

Zn(2+) contacts are provided by histidine 96, histidine 98, aspartate 100, histidine 101, histidine 184, and aspartate 205. The active-site Proton donor is the histidine 426. Residue histidine 448 coordinates Zn(2+). Positions glutamate 583 to aspartate 592 are enriched in acidic residues. Disordered stretches follow at residues glutamate 583–glutamate 621 and aspartate 802–glutamate 827. The span at glycine 606 to glutamate 621 shows a compositional bias: basic and acidic residues.

Belongs to the metallo-beta-lactamase superfamily. RNA-metabolizing metallo-beta-lactamase-like family. CPSF2/YSH1 subfamily.

The protein resides in the nucleus. Component of the cleavage factor I (CF I) involved in pre-mRNA 3'-end processing. This chain is Endoribonuclease YSH1 (YSH1), found in Yarrowia lipolytica (strain CLIB 122 / E 150) (Yeast).